The chain runs to 381 residues: Hps1-dma1 cluster transcription factor tfc7 (381 aa).

The zn(2)-C6 fungal-type DNA-binding region spans 10–37 (CDHCSATKIKCTQERPQCTRCRALGRDC). Residues 41-88 (RSLRAGKPPRSSQGLNRKISNAPVLPRQNTPVSNPTSMSSKPEHWPTM) form a disordered region. Composition is skewed to polar residues over residues 50–59 (RSSQGLNRKI) and 67–80 (RQNT…SMSS).

It is found in the nucleus. Transcription factor that regulates the expression of the hps1-dma1 gene cluster that probably mediates the biosynthesis a derivative of cyclopiazonic acid (CPA). Further studies are required to whether the CPA-like hps1-dma1 cluster is functional or a non-functional relic reflecting evolution of D.septosporum. The protein is Hps1-dma1 cluster transcription factor tfc7 (tfc7) of Dothistroma septosporum (strain NZE10 / CBS 128990) (Red band needle blight fungus).